The primary structure comprises 354 residues: Histidinol-phosphate aminotransferase (354 aa).

Position 210 is an N6-(pyridoxal phosphate)lysine (lysine 210).

The protein belongs to the class-II pyridoxal-phosphate-dependent aminotransferase family. Histidinol-phosphate aminotransferase subfamily. In terms of assembly, homodimer. Pyridoxal 5'-phosphate is required as a cofactor.

It catalyses the reaction L-histidinol phosphate + 2-oxoglutarate = 3-(imidazol-4-yl)-2-oxopropyl phosphate + L-glutamate. It functions in the pathway amino-acid biosynthesis; L-histidine biosynthesis; L-histidine from 5-phospho-alpha-D-ribose 1-diphosphate: step 7/9. The protein is Histidinol-phosphate aminotransferase of Clostridium botulinum (strain ATCC 19397 / Type A).